A 227-amino-acid polypeptide reads, in one-letter code: Cytochrome c oxidase subunit 2 (227 aa).

Residues 1–14 lie on the Mitochondrial intermembrane side of the membrane; it reads MAYPFQLGLQDATS. Residues 15–45 form a helical membrane-spanning segment; it reads PIMEELLHFHDHTLMIVFLISSLVLYIISLM. At 46–59 the chain is on the mitochondrial matrix side; sequence LTTKLTHTSTMDAQ. The helical transmembrane segment at 60 to 87 threads the bilayer; that stretch reads EVETVWTILPAIILILIALPSLRILYMM. At 88–227 the chain is on the mitochondrial intermembrane side; it reads DEINNPSLTV…YFETWSALMV (140 aa). The Cu cation site is built by H161, C196, E198, C200, H204, and M207. E198 contacts Mg(2+). Y218 bears the Phosphotyrosine mark.

It belongs to the cytochrome c oxidase subunit 2 family. In terms of assembly, component of the cytochrome c oxidase (complex IV, CIV), a multisubunit enzyme composed of 14 subunits. The complex is composed of a catalytic core of 3 subunits MT-CO1, MT-CO2 and MT-CO3, encoded in the mitochondrial DNA, and 11 supernumerary subunits COX4I, COX5A, COX5B, COX6A, COX6B, COX6C, COX7A, COX7B, COX7C, COX8 and NDUFA4, which are encoded in the nuclear genome. The complex exists as a monomer or a dimer and forms supercomplexes (SCs) in the inner mitochondrial membrane with NADH-ubiquinone oxidoreductase (complex I, CI) and ubiquinol-cytochrome c oxidoreductase (cytochrome b-c1 complex, complex III, CIII), resulting in different assemblies (supercomplex SCI(1)III(2)IV(1) and megacomplex MCI(2)III(2)IV(2)). Found in a complex with TMEM177, COA6, COX18, COX20, SCO1 and SCO2. Interacts with TMEM177 in a COX20-dependent manner. Interacts with COX20. Interacts with COX16. The cofactor is Cu cation.

Its subcellular location is the mitochondrion inner membrane. The catalysed reaction is 4 Fe(II)-[cytochrome c] + O2 + 8 H(+)(in) = 4 Fe(III)-[cytochrome c] + 2 H2O + 4 H(+)(out). Its function is as follows. Component of the cytochrome c oxidase, the last enzyme in the mitochondrial electron transport chain which drives oxidative phosphorylation. The respiratory chain contains 3 multisubunit complexes succinate dehydrogenase (complex II, CII), ubiquinol-cytochrome c oxidoreductase (cytochrome b-c1 complex, complex III, CIII) and cytochrome c oxidase (complex IV, CIV), that cooperate to transfer electrons derived from NADH and succinate to molecular oxygen, creating an electrochemical gradient over the inner membrane that drives transmembrane transport and the ATP synthase. Cytochrome c oxidase is the component of the respiratory chain that catalyzes the reduction of oxygen to water. Electrons originating from reduced cytochrome c in the intermembrane space (IMS) are transferred via the dinuclear copper A center (CU(A)) of subunit 2 and heme A of subunit 1 to the active site in subunit 1, a binuclear center (BNC) formed by heme A3 and copper B (CU(B)). The BNC reduces molecular oxygen to 2 water molecules using 4 electrons from cytochrome c in the IMS and 4 protons from the mitochondrial matrix. The sequence is that of Cytochrome c oxidase subunit 2 (MT-CO2) from Canis adustus (Side-striped jackal).